The primary structure comprises 228 residues: Leucokinins (228 aa).

An N-terminal signal peptide occupies residues 1–18; sequence MAMLLQVALPLLAAVSWG. Positions 19 to 164 are excised as a propeptide; sequence WELNENDDSL…PRFSPVSAIQ (146 aa). The tract at residues 80–118 is disordered; it reads EFSENNEAEDKSPTSAQNTQEHIPGNNFPPPAASNPPVN. Glycine amide occurs at positions 180 and 193. Residues 197–209 constitute a propeptide that is removed on maturation; sequence NTGRVHRQPKVVI. Residue Gly-217 is modified to Glycine amide. A propeptide spanning residues 221–228 is cleaved from the precursor; the sequence is NQKDDNVF.

It is found in the secreted. Functionally, stimulates both fluid secretion by the Malpighian tubules and hindgut contractions. Depolarize the transepithelial voltage of the Malpighian tubules in concentrations of less than 10(-9) M and increase the frequency of hindgut contractions at concentrations above 10(-8) M. In Aedes aegypti (Yellowfever mosquito), this protein is Leucokinins.